The chain runs to 99 residues: Acylphosphatase-2 (99 aa).

Position 2 is an N-acetylserine (serine 2). The Acylphosphatase-like domain maps to 9–99 (SVDYEVFGRV…LEYSNFSIRY (91 aa)). Active-site residues include arginine 24 and asparagine 42. The residue at position 93 (serine 93) is a Phosphoserine.

The protein belongs to the acylphosphatase family.

It catalyses the reaction an acyl phosphate + H2O = a carboxylate + phosphate + H(+). Its function is as follows. Its physiological role is not yet clear. The sequence is that of Acylphosphatase-2 (ACYP2) from Cavia porcellus (Guinea pig).